Consider the following 207-residue polypeptide: Serotonin N-acetyltransferase (207 aa).

Residues 1–28 (MSTQSTHPLKPEAPRLPPGIPESPSCQR) form a disordered region. Thr31 carries the post-translational modification Phosphothreonine; by PKA. The N-acetyltransferase domain maps to 35-194 (SEFRCLTPED…SLTFMELHCS (160 aa)). A substrate-binding site is contributed by Leu124. Acetyl-CoA contacts are provided by residues 124 to 126 (LAV) and 132 to 137 (QQGRGP). Residue Met159 participates in substrate binding. An acetyl-CoA-binding site is contributed by 168 to 170 (YER). At Ser205 the chain carries Phosphoserine.

This sequence belongs to the acetyltransferase family. AANAT subfamily. As to quaternary structure, monomer. Interacts with several 14-3-3 proteins, including YWHAB, YWHAE, YWHAG and YWHAZ, preferentially when phosphorylated at Thr-31. Phosphorylation on Ser-205 also allows binding to YWHAZ, but with lower affinity. The interaction with YWHAZ considerably increases affinity for arylalkylamines and acetyl-CoA and protects the enzyme from dephosphorylation and proteasomal degradation. It may also prevent thiol-dependent inactivation. In terms of processing, cAMP-dependent phosphorylation on both N-terminal Thr-31 and C-terminal Ser-205 regulates AANAT activity by promoting interaction with 14-3-3 proteins. As to expression, highly expressed in pineal gland and at lower levels in the retina. Weak expression in several brain regions and in the pituitary gland.

It localises to the cytoplasm. The enzyme catalyses a 2-arylethylamine + acetyl-CoA = an N-acetyl-2-arylethylamine + CoA + H(+). It participates in aromatic compound metabolism; melatonin biosynthesis; melatonin from serotonin: step 1/2. In terms of biological role, controls the night/day rhythm of melatonin production in the pineal gland. Catalyzes the N-acetylation of serotonin into N-acetylserotonin, the penultimate step in the synthesis of melatonin. This chain is Serotonin N-acetyltransferase (AANAT), found in Homo sapiens (Human).